The primary structure comprises 329 residues: Biotin synthase (329 aa).

The region spanning 48–278 (FVGDKVFLCS…TKRISICGGR (231 aa)) is the Radical SAM core domain. Residues cysteine 66, cysteine 70, and cysteine 73 each coordinate [4Fe-4S] cluster. [2Fe-2S] cluster contacts are provided by serine 143 and cysteine 203.

Belongs to the radical SAM superfamily. Biotin synthase family. As to quaternary structure, homodimer. It depends on [4Fe-4S] cluster as a cofactor. [2Fe-2S] cluster is required as a cofactor.

The enzyme catalyses (4R,5S)-dethiobiotin + (sulfur carrier)-SH + 2 reduced [2Fe-2S]-[ferredoxin] + 2 S-adenosyl-L-methionine = (sulfur carrier)-H + biotin + 2 5'-deoxyadenosine + 2 L-methionine + 2 oxidized [2Fe-2S]-[ferredoxin]. Its pathway is cofactor biosynthesis; biotin biosynthesis; biotin from 7,8-diaminononanoate: step 2/2. Catalyzes the conversion of dethiobiotin (DTB) to biotin by the insertion of a sulfur atom into dethiobiotin via a radical-based mechanism. This is Biotin synthase from Geotalea daltonii (strain DSM 22248 / JCM 15807 / FRC-32) (Geobacter daltonii).